The primary structure comprises 1109 residues: ABC transporter G family member 28 (1109 aa).

2 consecutive transmembrane segments (helical) span residues 5–25 (NSYF…LILQ) and 291–311 (NITA…IILY). A disordered region spans residues 325–411 (QAKSREKAVQ…DTKKGKKKEK (87 aa)). The segment covering 339 to 357 (SQSREKWKSAKDIAKKHAT) has biased composition (basic and acidic residues). In terms of domain architecture, ABC transporter spans 499-741 (VAFKDLSITL…FSSLGIVVPE (243 aa)). ATP is bound at residue 533-540 (GPSGAGKT). Positions 859 to 1056 (QQYRYFLGRL…ALEAFVVSNA (198 aa)) constitute an ABC transmembrane type-2 domain. Helical transmembrane passes span 879 to 899 (LAVD…LAKV), 904 to 924 (FGAM…KITA), 954 to 974 (TVDH…FYFF), 986 to 1006 (VVLI…AILF), 1008 to 1028 (PGPA…IATS), and 1084 to 1104 (CLVF…FCMV).

This sequence belongs to the ABC transporter superfamily. ABCG family. Eye pigment precursor importer (TC 3.A.1.204) subfamily.

The protein resides in the membrane. The sequence is that of ABC transporter G family member 28 (ABCG28) from Arabidopsis thaliana (Mouse-ear cress).